A 397-amino-acid polypeptide reads, in one-letter code: Ribosomal RNA processing protein 1 homolog (397 aa).

Basic and acidic residues predominate over residues 334 to 343 (EAAEAARQEN). Positions 334–366 (EAAEAARQENGDDVPDDEIAEVKKGNGKKTAVP) are disordered.

This sequence belongs to the RRP1 family.

It is found in the nucleus. Functionally, may be involved in the generation of 28S rRNA. This chain is Ribosomal RNA processing protein 1 homolog, found in Caenorhabditis elegans.